The primary structure comprises 457 residues: MKLLISLLWSIFFSIVYSEKTLLNFKHYELCNGIYSKSESGGSLNPAIYVNWTEPWGQEDEVEVLIFNWKEIRKLGAFRSDDQFTYICDYDAVYTDHLCEADQLGLYLWNSTSAKSIRSYIIPTNADPQNIIYEISQSGYYCIWSHSKKMLPYQALVNWQNAYGGLPASQFPRMPISGGITIAYSVILALWMFFRFQYKHSIVTVQKAIMFLLIFSCAQQAVTSIVLDTENLRNRGNFTWLGETLVSILFACQLVLDLALLLILSWGYTRYSTNMRDRLFTEAKIPLIICFFALFVVRFFAITIQSIHLGLWFCFFFLTACISALYILFGAFVALPSTLRALVEQRYYTLHSIYKIFRIMVLCGVVTIFSFSLVALIFCSNTNNNSTNKLWKIRWYFLDGWIDGVHLTYLITLSSLWRPSQENPDLDPTGLSYPVLDPRLEEELDLLEEDIRADKSK.

The first 18 residues, 1–18 (MKLLISLLWSIFFSIVYS), serve as a signal peptide directing secretion. The Lumenal portion of the chain corresponds to 19–173 (EKTLLNFKHY…GGLPASQFPR (155 aa)). The chain crosses the membrane as a helical span at residues 174–194 (MPISGGITIAYSVILALWMFF). At 195–207 (RFQYKHSIVTVQK) the chain is on the cytoplasmic side. The chain crosses the membrane as a helical span at residues 208–228 (AIMFLLIFSCAQQAVTSIVLD). Over 229–243 (TENLRNRGNFTWLGE) the chain is Lumenal. A helical membrane pass occupies residues 244–264 (TLVSILFACQLVLDLALLLIL). Residues 265-284 (SWGYTRYSTNMRDRLFTEAK) lie on the Cytoplasmic side of the membrane. Residues 285 to 305 (IPLIICFFALFVVRFFAITIQ) form a helical membrane-spanning segment. Residues 306 to 314 (SIHLGLWFC) are Lumenal-facing. Residues 315-335 (FFFLTACISALYILFGAFVAL) form a helical membrane-spanning segment. The Cytoplasmic segment spans residues 336 to 358 (PSTLRALVEQRYYTLHSIYKIFR). A helical transmembrane segment spans residues 359-379 (IMVLCGVVTIFSFSLVALIFC). Residues 380-457 (SNTNNNSTNK…EEDIRADKSK (78 aa)) lie on the Lumenal side of the membrane.

This sequence belongs to the LU7TM family.

It is found in the endoplasmic reticulum membrane. This is an uncharacterized protein from Schizosaccharomyces pombe (strain 972 / ATCC 24843) (Fission yeast).